A 1249-amino-acid chain; its full sequence is LRR receptor-like serine/threonine-protein kinase GSO1 (1249 aa).

An N-terminal signal peptide occupies residues 1 to 18 (MQPLVLLLLFILCFSGLG). At 19–876 (QPGIINNDLQ…QQGLSARSVV (858 aa)) the chain is on the extracellular side. Residues Asn77 and Asn117 are each glycosylated (N-linked (GlcNAc...) asparagine). 31 LRR repeats span residues 94–118 (FDNL…LSNL), 119–142 (TSLE…LGSL), 144–166 (NIRS…LGNL), 168–190 (NLQM…LGRL), 191–214 (VRVQ…LGNC), 216–238 (DLTV…LGRL), 239–262 (ENLE…LGEM), 264–285 (QLQY…SLAD), 286–310 (LGNL…FWNM), 312–334 (QLLD…ICSN), 336–359 (TNLE…LSKC), 360–383 (QSLK…LFEL), 385–407 (ELTD…ISNL), 408–431 (TNLQ…ISAL), 433–455 (KLEV…IGNC), 457–479 (SLKM…IGRL), 480–503 (KELN…LGNC), 505–527 (QLNI…FGFL), 528–551 (KGLE…LISL), 553–574 (NLTR…LCGS), 576–598 (SYLS…LGNS), 599–622 (QNLD…LGKI), 623–646 (RELS…LVLC), 648–670 (KLTH…LGKL), 671–694 (SQLG…LFNC), 696–718 (KLLV…IGNL), 719–742 (GALN…MGKL), 744–766 (KLYE…IGQL), 767–791 (QDLQ…IGTL), 792–815 (SKLE…VGDM), and 817–838 (SLGY…QFSR). N-linked (GlcNAc...) asparagine glycans are attached at residues Asn213, Asn228, and Asn248. 3 N-linked (GlcNAc...) asparagine glycosylation sites follow: Asn298, Asn309, and Asn334. Asn369, Asn393, and Asn406 each carry an N-linked (GlcNAc...) asparagine glycan. A glycan (N-linked (GlcNAc...) asparagine) is linked at Asn454. N-linked (GlcNAc...) asparagine glycosylation is found at Asn537, Asn553, Asn558, and Asn565. N-linked (GlcNAc...) asparagine glycans are attached at residues Asn693 and Asn708. Asn779 carries N-linked (GlcNAc...) asparagine glycosylation. Residue Asn822 is glycosylated (N-linked (GlcNAc...) asparagine). Residues 877-897 (IISAISALTAIGLMILVIALF) form a helical membrane-spanning segment. Residues 898–1249 (FKQRHDFFKK…NNRTAGYKKL (352 aa)) lie on the Cytoplasmic side of the membrane. Phosphothreonine is present on Thr948. Positions 951–1240 (LSEEFMIGSG…ACDSLLHVYN (290 aa)) constitute a Protein kinase domain. ATP is bound by residues 957–965 (IGSGGSGKV) and Lys979. Residues Tyr1027 and Tyr1071 each carry the phosphotyrosine modification. The active-site Proton acceptor is Asp1084. Phosphotyrosine is present on residues Tyr1129 and Tyr1136.

The protein belongs to the protein kinase superfamily. Ser/Thr protein kinase family. Interacts with CIF1 and CIF2. As to expression, mostly expressed in siliques, seeds, developing embryos and seedlings, detected in flower buds and roots, but not in leaves or stems.

The protein resides in the cell membrane. The catalysed reaction is L-seryl-[protein] + ATP = O-phospho-L-seryl-[protein] + ADP + H(+). It catalyses the reaction L-threonyl-[protein] + ATP = O-phospho-L-threonyl-[protein] + ADP + H(+). Together with GSO2, receptor-like serine/threonine-kinase required during the development of the epidermal surface in embryos and cotyledons. In coordination with GSO2, regulates root growth through control of cell division and cell fate specification. Controls seedling root growth by modulating sucrose response after germination. Receptor of the peptide hormones CIF1 and CIF2 required for contiguous Casparian strip diffusion barrier formation in roots. Required for localizing CASP proteins into the Casparian strip following an uninterrupted, ring-like domain, to trigger endodermal differentiation and thus regulate potassium ion (K) homeostasis. Involved in the maintenance of water transport and root pressure. May also be involved in the regulation of suberin accumulation in the endodermis. The chain is LRR receptor-like serine/threonine-protein kinase GSO1 from Arabidopsis thaliana (Mouse-ear cress).